Here is a 327-residue protein sequence, read N- to C-terminus: Phenylalanine--tRNA ligase alpha subunit (327 aa).

E252 is a binding site for Mg(2+).

It belongs to the class-II aminoacyl-tRNA synthetase family. Phe-tRNA synthetase alpha subunit type 1 subfamily. As to quaternary structure, tetramer of two alpha and two beta subunits. Mg(2+) is required as a cofactor.

The protein resides in the cytoplasm. The catalysed reaction is tRNA(Phe) + L-phenylalanine + ATP = L-phenylalanyl-tRNA(Phe) + AMP + diphosphate + H(+). The polypeptide is Phenylalanine--tRNA ligase alpha subunit (Haemophilus ducreyi (strain 35000HP / ATCC 700724)).